A 219-amino-acid chain; its full sequence is Pyridoxine/pyridoxamine 5'-phosphate oxidase (219 aa).

Residues 1–23 form a disordered region; the sequence is MTSSVIPPSPSAADYAAEGDRPL. FMN is bound by residues 66–71, 81–82, Lys-88, and Gln-110; these read RIVLLK and FT. Lys-71 contributes to the substrate binding site. Positions 128, 132, and 136 each coordinate substrate. Residues 145–146 and Trp-191 contribute to the FMN site; that span reads QS. Residue 197–199 participates in substrate binding; the sequence is RMH. An FMN-binding site is contributed by Arg-201.

Belongs to the pyridoxamine 5'-phosphate oxidase family. As to quaternary structure, homodimer. FMN serves as cofactor.

The enzyme catalyses pyridoxamine 5'-phosphate + O2 + H2O = pyridoxal 5'-phosphate + H2O2 + NH4(+). It carries out the reaction pyridoxine 5'-phosphate + O2 = pyridoxal 5'-phosphate + H2O2. The protein operates within cofactor metabolism; pyridoxal 5'-phosphate salvage; pyridoxal 5'-phosphate from pyridoxamine 5'-phosphate: step 1/1. Its pathway is cofactor metabolism; pyridoxal 5'-phosphate salvage; pyridoxal 5'-phosphate from pyridoxine 5'-phosphate: step 1/1. Functionally, catalyzes the oxidation of either pyridoxine 5'-phosphate (PNP) or pyridoxamine 5'-phosphate (PMP) into pyridoxal 5'-phosphate (PLP). The polypeptide is Pyridoxine/pyridoxamine 5'-phosphate oxidase (Hyphomonas neptunium (strain ATCC 15444)).